The sequence spans 461 residues: MSDSNHSLDLHSYTQLEVERFRESLIQFYDKTKRILPWRKKECIPPSEDSPLEDWEQPVQRLYEVLVSEIMLQQTRVETVKRYYTKWMETLPTLKSCAEAEYNTQVMPLWSGMGFYTRCKRLHQACQHLAKLHPSEIPRTGDEWAKGIPGVGPYTAGAVLSIAWKQPTGIVDGNVIRVLSRALAIHSDCSKGKANALIWKLANELVDPVRPGDFNQALMELGAITCTPQSPRCSVCPISEICKAYQEQNVIRDGNTIKYDIEDVPCNICITDIPSKEDLQNWVVARYPVHPAKTKQREERALVVIFQKTDPSTKEKFFLIRKRPSAGLLAGLWDFPTIEFGQESWPKDMDAEFQKSIAQWISNDSRSLIKKYQSRGRYLHIFSHIRKTSHVFYAIASPDIVTNEDFFWISQSDLEHVGMCELGLKNYRAALEIKKRKVTSLSNFKEPKLTSARRIVTKAEC.

Glutamate 69 acts as the Proton donor/acceptor in catalysis. The [4Fe-4S] cluster site is built by cysteine 226, cysteine 233, cysteine 236, and cysteine 242. In terms of domain architecture, Nudix hydrolase spans 296 to 437; sequence QREERALVVI…RAALEIKKRK (142 aa). The Nudix box motif lies at 340–366; the sequence is FGQESWPKDMDAEFQKSIAQWISNDSR.

This sequence belongs to the Nth/MutY family. Monomer. The cofactor is [4Fe-4S] cluster.

It carries out the reaction Hydrolyzes free adenine bases from 7,8-dihydro-8-oxoguanine:adenine mismatched double-stranded DNA, leaving an apurinic site.. Its function is as follows. Adenine glycosylase active on G-A mispairs. Has glycosylase and nicking activities and is active at A/G and A/GO sites. The polypeptide is Adenine DNA glycosylase (myh1) (Schizosaccharomyces pombe (strain 972 / ATCC 24843) (Fission yeast)).